A 194-amino-acid chain; its full sequence is uncharacterized protein (194 aa).

The chain crosses the membrane as a helical span at residues 17 to 37 (DVWLYLLVFGCLSVLVLVLVH).

The protein belongs to the IIV-6 307L family.

The protein localises to the membrane. This is an uncharacterized protein from Invertebrate iridescent virus 3 (IIV-3).